The following is an 80-amino-acid chain: MSDAAVPPKKASPKKAAAKKASPKKSAARKTAAKKTAKKPAVRKPAAKKRAAPKKKPAAAKKPAAKKAPKKAVKKAPKKK.

The disordered stretch occupies residues 1–80 (MSDAAVPPKK…KAVKKAPKKK (80 aa)). A compositionally biased stretch (basic residues) spans 11 to 80 (ASPKKAAAKK…KAVKKAPKKK (70 aa)).

The protein localises to the nucleus. It localises to the chromosome. This Trypanosoma cruzi protein is Histone H1.M6.1.